The chain runs to 90 residues: UPF0367 protein Npun_R4552 (90 aa).

The protein belongs to the UPF0367 family.

In Nostoc punctiforme (strain ATCC 29133 / PCC 73102), this protein is UPF0367 protein Npun_R4552.